The primary structure comprises 390 residues: GTPase Obg (390 aa).

The region spanning 1–159 is the Obg domain; the sequence is MKFVDEAAIL…RDILLELLLL (159 aa). The 174-residue stretch at 160–333 folds into the OBG-type G domain; that stretch reads ADVGMLGLPN…LCWDVMKFIN (174 aa). GTP-binding positions include 166–173, 191–195, 213–216, 283–286, and 314–316; these read GLPNAGKS, FTTLV, DIPG, NKID, and SAV. Residues S173 and T193 each coordinate Mg(2+). Positions 366–384 are enriched in acidic residues; sequence AEADDDWDDDWDEEDDEGV. A disordered region spans residues 366-390; the sequence is AEADDDWDDDWDEEDDEGVEIIYQK.

It belongs to the TRAFAC class OBG-HflX-like GTPase superfamily. OBG GTPase family. Monomer. Requires Mg(2+) as cofactor.

Its subcellular location is the cytoplasm. In terms of biological role, an essential GTPase which binds GTP, GDP and possibly (p)ppGpp with moderate affinity, with high nucleotide exchange rates and a fairly low GTP hydrolysis rate. Plays a role in control of the cell cycle, stress response, ribosome biogenesis and in those bacteria that undergo differentiation, in morphogenesis control. In Serratia proteamaculans (strain 568), this protein is GTPase Obg.